We begin with the raw amino-acid sequence, 389 residues long: SH2 domain-containing protein 2A (389 aa).

The interval 41–63 (AASPQAPEAASNTGNAERAEEVP) is disordered. Residues 95 to 186 (WFHGFITRRE…PYGETLTEPL (92 aa)) enclose the SH2 domain. Positions 190–295 (TPEPAGLSLR…PIAFYAMGRG (106 aa)) are disordered. Residues 203–216 (SNFGSKSQDPNPQY) are compositionally biased toward polar residues. The residue at position 217 (Ser-217) is a Phosphoserine. 2 short sequence motifs (SH3-binding) span residues 244 to 250 (RPKPPIP) and 272 to 278 (RPKPSNP). Over residues 245–256 (PKPPIPAKPQLP) the composition is skewed to pro residues. Ser-296 carries the phosphoserine modification. The interval 324–389 (KSWSRPVPGG…QAWLPLGPPQ (66 aa)) is disordered. Positions 337–348 (GGSQLHSENSVI) are enriched in polar residues. The segment covering 352–361 (PPLPHQPPPA) has biased composition (pro residues).

As to quaternary structure, interacts with KDR. Interacts with TXK and ITK. Phosphorylated on tyrosine residues. As to expression, expression limited to tissues of the immune system and, in particular, activated T-cells. Expressed in peripheral blood leukocytes, thymus and spleen. Much lower expression or undetectable, in brain, placenta, skeletal muscle, prostate, testis, ovary, small intestine, and colon. Expressed at low levels in unstimulated T-cells, but not expressed in normal resting or activated B-cells. According to PubMed:10692392, expression is not restricted to activated T-cells, but strongly expressed in blood cell lineages, the endothelium and other cell and tissue types, such as heart, lung, and liver.

It is found in the cytoplasm. In terms of biological role, could be a T-cell-specific adapter protein involved in the control of T-cell activation. May play a role in the CD4-p56-LCK-dependent signal transduction pathway. Could also play an important role in normal and pathological angiogenesis. Could be an adapter protein that facilitates and regulates interaction of KDR with effector proteins important to endothelial cell survival and proliferation. The sequence is that of SH2 domain-containing protein 2A (SH2D2A) from Homo sapiens (Human).